A 358-amino-acid chain; its full sequence is Alanine racemase (358 aa).

Lys35 acts as the Proton acceptor; specific for D-alanine in catalysis. An N6-(pyridoxal phosphate)lysine modification is found at Lys35. Position 130 (Arg130) interacts with substrate. The active-site Proton acceptor; specific for L-alanine is the Tyr255. Met303 lines the substrate pocket.

This sequence belongs to the alanine racemase family. The cofactor is pyridoxal 5'-phosphate.

The enzyme catalyses L-alanine = D-alanine. It participates in amino-acid biosynthesis; D-alanine biosynthesis; D-alanine from L-alanine: step 1/1. Catalyzes the interconversion of L-alanine and D-alanine. May also act on other amino acids. The polypeptide is Alanine racemase (alr) (Shewanella woodyi (strain ATCC 51908 / MS32)).